Here is a 438-residue protein sequence, read N- to C-terminus: Transposon Ty2-LR1 Gag polyprotein (438 aa).

Composition is skewed to polar residues over residues 1-11, 19-39, and 49-60; these read MESQQLHQNPH, ASVT…SASN, and KVNSQQETTPGT. Disordered stretches follow at residues 1–86, 364–397, and 419–438; these read MESQ…GQYQ, KNVS…AKAH, and SSQY…TERI. The RNA-binding stretch occupies residues 295–397; the sequence is ENNINVSDRL…SSKPRAAKAH (103 aa). The segment covering 369–381 has biased composition (low complexity); it reads TSPNTTNTKVTTR.

As to quaternary structure, homotrimer.

The protein resides in the cytoplasm. Functionally, capsid protein (CA) is the structural component of the virus-like particle (VLP), forming the shell that encapsulates the retrotransposons dimeric RNA genome. The particles are assembled from trimer-clustered units and there are holes in the capsid shells that allow for the diffusion of macromolecules. CA also has nucleocapsid-like chaperone activity, promoting primer tRNA(i)-Met annealing to the multipartite primer-binding site (PBS), dimerization of Ty2 RNA and initiation of reverse transcription. In Saccharomyces cerevisiae (strain ATCC 204508 / S288c) (Baker's yeast), this protein is Transposon Ty2-LR1 Gag polyprotein (TY2A-LR1).